The chain runs to 41 residues: Bacteriocin (41 aa).

An intrachain disulfide couples Cys9 to Cys14.

It is found in the secreted. In terms of biological role, bacteriocin active against S.aureus, S.typhi, B.thuringiensis, Klebsiella sp., E.coli KL16 and E.coli Gj137. This chain is Bacteriocin, found in Lactococcus sp.